The primary structure comprises 719 residues: DNA ligase (719 aa).

Residues 42–46, 92–93, and Glu126 contribute to the NAD(+) site; these read DAAYD and SL. The active-site N6-AMP-lysine intermediate is the Lys128. NAD(+) is bound by residues Arg149, Glu185, Lys301, and Lys325. Zn(2+) is bound by residues Cys430, Cys433, Cys448, and Cys454. Residues 640 to 719 enclose the BRCT domain; it reads ATGSPVEGKT…DDWFKLVGED (80 aa).

It belongs to the NAD-dependent DNA ligase family. LigA subfamily. It depends on Mg(2+) as a cofactor. Requires Mn(2+) as cofactor.

It catalyses the reaction NAD(+) + (deoxyribonucleotide)n-3'-hydroxyl + 5'-phospho-(deoxyribonucleotide)m = (deoxyribonucleotide)n+m + AMP + beta-nicotinamide D-nucleotide.. In terms of biological role, DNA ligase that catalyzes the formation of phosphodiester linkages between 5'-phosphoryl and 3'-hydroxyl groups in double-stranded DNA using NAD as a coenzyme and as the energy source for the reaction. It is essential for DNA replication and repair of damaged DNA. In Brucella melitensis biotype 2 (strain ATCC 23457), this protein is DNA ligase.